A 77-amino-acid polypeptide reads, in one-letter code: Protein ImpC (77 aa).

Belongs to the DinI family.

This chain is Protein ImpC (impC), found in Salmonella typhimurium.